The chain runs to 174 residues: uncharacterized protein (174 aa).

This is an uncharacterized protein from Bacillus subtilis (strain 168).